Reading from the N-terminus, the 410-residue chain is Histidine--tRNA ligase (410 aa).

Belongs to the class-II aminoacyl-tRNA synthetase family. As to quaternary structure, homodimer.

The protein resides in the cytoplasm. It catalyses the reaction tRNA(His) + L-histidine + ATP = L-histidyl-tRNA(His) + AMP + diphosphate + H(+). This chain is Histidine--tRNA ligase, found in Campylobacter hominis (strain ATCC BAA-381 / DSM 21671 / CCUG 45161 / LMG 19568 / NCTC 13146 / CH001A).